Consider the following 343-residue polypeptide: Probable 4-hydroxy-tetrahydrodipicolinate reductase 1, chloroplastic (343 aa).

The transit peptide at methionine 1–alanine 14 directs the protein to the chloroplast. NAD(+)-binding positions include glycine 167–threonine 169 and serine 190–methionine 193. The active-site Proton donor/acceptor is the histidine 226. Catalysis depends on lysine 230, which acts as the Proton donor. A (S)-2,3,4,5-tetrahydrodipicolinate-binding site is contributed by glycine 235–threonine 236.

Belongs to the DapB family.

The protein resides in the plastid. Its subcellular location is the chloroplast. It catalyses the reaction (S)-2,3,4,5-tetrahydrodipicolinate + NAD(+) + H2O = (2S,4S)-4-hydroxy-2,3,4,5-tetrahydrodipicolinate + NADH + H(+). The enzyme catalyses (S)-2,3,4,5-tetrahydrodipicolinate + NADP(+) + H2O = (2S,4S)-4-hydroxy-2,3,4,5-tetrahydrodipicolinate + NADPH + H(+). It functions in the pathway amino-acid biosynthesis; L-lysine biosynthesis via DAP pathway; (S)-tetrahydrodipicolinate from L-aspartate: step 4/4. Catalyzes the conversion of 4-hydroxy-tetrahydrodipicolinate (HTPA) to tetrahydrodipicolinate. The chain is Probable 4-hydroxy-tetrahydrodipicolinate reductase 1, chloroplastic (DAPB1) from Oryza sativa subsp. japonica (Rice).